Reading from the N-terminus, the 95-residue chain is Defensin-1 (95 aa).

Residues 1–19 (MKIYFIVGLLFMAMVAIMA) form the signal peptide. The propeptide occupies 20 to 43 (APVEDEFEPLEHFENEERADRHRR). Intrachain disulfides connect Cys46-Cys74, Cys60-Cys79, and Cys64-Cys81. Phe94 carries the post-translational modification Phenylalanine amide.

It is found in the secreted. In terms of biological role, found in royal jelly and in hemolymph, potent antibacterial protein against Gram-positive bacteria at low concentration. This is Defensin-1 from Apis mellifera carnica (Carniolan honeybee).